A 233-amino-acid polypeptide reads, in one-letter code: Lipoprotein-releasing system ATP-binding protein LolD (233 aa).

The ABC transporter domain occupies 6–233; sequence LQCDNLCKRY…TAELSLMGAE (228 aa). 42–49 is a binding site for ATP; it reads GSSGSGKS.

Belongs to the ABC transporter superfamily. Lipoprotein translocase (TC 3.A.1.125) family. The complex is composed of two ATP-binding proteins (LolD) and two transmembrane proteins (LolC and LolE).

It localises to the cell inner membrane. Functionally, part of the ABC transporter complex LolCDE involved in the translocation of mature outer membrane-directed lipoproteins, from the inner membrane to the periplasmic chaperone, LolA. Responsible for the formation of the LolA-lipoprotein complex in an ATP-dependent manner. The chain is Lipoprotein-releasing system ATP-binding protein LolD from Shigella dysenteriae serotype 1 (strain Sd197).